A 66-amino-acid chain; its full sequence is Large ribosomal subunit protein eL24 (66 aa).

The Zn(2+) site is built by Cys7, Cys10, Cys33, and Cys37. The segment at 7 to 37 (CSYCGKPFEPGTGKMYVRNDGRVLFFCSRKC) adopts a C4-type zinc-finger fold.

This sequence belongs to the eukaryotic ribosomal protein eL24 family. Part of the 50S ribosomal subunit. Forms a cluster with proteins L3 and L14. It depends on Zn(2+) as a cofactor.

Binds to the 23S rRNA. The chain is Large ribosomal subunit protein eL24 from Pyrococcus furiosus (strain ATCC 43587 / DSM 3638 / JCM 8422 / Vc1).